The sequence spans 358 residues: MIEELIRSEIRSFIPYNANQQPYKIKLDANESPFTLPPQMRKKLAEYILEDPQLNLYPDTDSVQLRQALGEYWSVDKENIIVGTGSDQLIQIIANVFLEKGDKVLYPTPSFGMYKDSCVIAGGRAVDYILDQNDNFSYSADKIIKTYELEQPKVIYICNPNNPTGNLMPQDEILRVLKACTKSVVVVDEAYAEFSDTTVIPFIKEYENLLILRTFSKAFGLAGIRCGYSIASEKLTRAVNLTRPPYNISSLSQFTAALILSYKEEIQNNIQYLVEERERVLSKLKEIDGLKVYSSAANFILIKVQNSKDIYRKLCEKGIFVRAFSSSPLLSDCMRITIGTQEQNSILLDELYAICYNK.

Position 217 is an N6-(pyridoxal phosphate)lysine (lysine 217).

This sequence belongs to the class-II pyridoxal-phosphate-dependent aminotransferase family. Histidinol-phosphate aminotransferase subfamily. As to quaternary structure, homodimer. It depends on pyridoxal 5'-phosphate as a cofactor.

The enzyme catalyses L-histidinol phosphate + 2-oxoglutarate = 3-(imidazol-4-yl)-2-oxopropyl phosphate + L-glutamate. The protein operates within amino-acid biosynthesis; L-histidine biosynthesis; L-histidine from 5-phospho-alpha-D-ribose 1-diphosphate: step 7/9. The chain is Histidinol-phosphate aminotransferase from Ruminiclostridium cellulolyticum (strain ATCC 35319 / DSM 5812 / JCM 6584 / H10) (Clostridium cellulolyticum).